The chain runs to 354 residues: Guanine nucleotide-binding protein G(t) subunit alpha-2 (354 aa).

The segment at 1-28 (MGSGISAEDKELARRSKELEKKLQEDAD) is disordered. G2 carries the N-myristoyl glycine lipid modification. The span at 7-28 (AEDKELARRSKELEKKLQEDAD) shows a compositional bias: basic and acidic residues. The 323-residue stretch at 32–354 (KTVKLLLLGA…KENLKDCGLF (323 aa)) folds into the G-alpha domain. The tract at residues 35–48 (KLLLLGAGESGKST) is G1 motif. GTP contacts are provided by residues 40–47 (GAGESGKS), 175–181 (LRSRVKT), 200–204 (DVGGQ), 269–272 (NKKD), and A326. The Mg(2+) site is built by S47 and T181. Positions 173–181 (DVLRSRVKT) are G2 motif. Residues 196 to 205 (FRMFDVGGQR) form a G3 motif region. Residues 265–272 (VLFLNKKD) are G4 motif. Residues 324-329 (TCATDT) are G5 motif.

The protein belongs to the G-alpha family. G(i/o/t/z) subfamily. As to quaternary structure, g proteins are composed of 3 units; alpha, beta and gamma. The alpha chain contains the guanine nucleotide binding site. In terms of tissue distribution, in the retina, expressed in the rod photoreceptors.

Its subcellular location is the cell projection. The protein resides in the cilium. It localises to the photoreceptor outer segment. It is found in the photoreceptor inner segment. Its function is as follows. Guanine nucleotide-binding proteins (G proteins) are involved as modulators or transducers in various transmembrane signaling systems. Transducin is an amplifier and one of the transducers of a visual impulse that performs the coupling between rhodopsin and cGMP-phosphodiesterase. This Mus musculus (Mouse) protein is Guanine nucleotide-binding protein G(t) subunit alpha-2 (Gnat2).